The sequence spans 267 residues: Thiamine pyrophosphokinase 1 (267 aa).

This sequence belongs to the thiamine pyrophosphokinase family. In terms of tissue distribution, expressed in roots, leaves and flowers.

The protein localises to the cytoplasm. The protein resides in the cytosol. It carries out the reaction thiamine + ATP = thiamine diphosphate + AMP + H(+). The protein operates within cofactor biosynthesis; thiamine diphosphate biosynthesis; thiamine diphosphate from thiamine: step 1/1. Its function is as follows. Catalyzes the phosphorylation of thiamine to thiamine pyrophosphate (TPP). TPP is an active cofactor for enzymes involved in glycolysis and energy production. Plant leaves require high levels of TPP for photosynthesis and carbohydrate metabolism. The sequence is that of Thiamine pyrophosphokinase 1 from Arabidopsis thaliana (Mouse-ear cress).